Consider the following 161-residue polypeptide: SsrA-binding protein (161 aa).

It belongs to the SmpB family.

The protein localises to the cytoplasm. Functionally, required for rescue of stalled ribosomes mediated by trans-translation. Binds to transfer-messenger RNA (tmRNA), required for stable association of tmRNA with ribosomes. tmRNA and SmpB together mimic tRNA shape, replacing the anticodon stem-loop with SmpB. tmRNA is encoded by the ssrA gene; the 2 termini fold to resemble tRNA(Ala) and it encodes a 'tag peptide', a short internal open reading frame. During trans-translation Ala-aminoacylated tmRNA acts like a tRNA, entering the A-site of stalled ribosomes, displacing the stalled mRNA. The ribosome then switches to translate the ORF on the tmRNA; the nascent peptide is terminated with the 'tag peptide' encoded by the tmRNA and targeted for degradation. The ribosome is freed to recommence translation, which seems to be the essential function of trans-translation. In Desulforamulus reducens (strain ATCC BAA-1160 / DSM 100696 / MI-1) (Desulfotomaculum reducens), this protein is SsrA-binding protein.